Reading from the N-terminus, the 337-residue chain is Zinc finger protein Gfi-1b (337 aa).

The segment at 1–20 (MPRSFLVKSKKAHTYHQHRF) is mediates repression of transcription. The SNAG domain stretch occupies residues 1–20 (MPRSFLVKSKKAHTYHQHRF). 6 C2H2-type zinc fingers span residues 170–193 (YHCVKCNKVFSTPHGLEVHVRRSH), 199–221 (FACEVCGKTFGHAVSLEQHTNIH), 227–249 (FECKMCGKTFKRSSTLSTHLLIH), 255–277 (YPCQYCGKRFHQKSDMKKHTYIH), 283–305 (HKCQVCGKAFSQSSNLITHSRKH), and 311–334 (FSCELCAKGFQRKVDLRRHRETQH).

As to expression, expressed in erythroid cells of primitive and definitive lineage and bone marrow cells.

It localises to the nucleus. Essential transcriptional regulator necessary for development and differentiation of erythroid and megakaryocytic lineages. Alters histone methylation by recruiting histone methyltransferase to target genes promoters. Plays a role in heterochromatin formation. This chain is Zinc finger protein Gfi-1b (GFI1B), found in Gallus gallus (Chicken).